The chain runs to 372 residues: Cyclin-J (372 aa).

The Cyclin N-terminal domain occupies 15–143; that stretch reads DIHQALRYKE…LLETFQWNLC (129 aa).

Belongs to the cyclin family.

The chain is Cyclin-J (CCNJ) from Homo sapiens (Human).